The chain runs to 1069 residues: Leucine--tRNA ligase (1069 aa).

Residues Thr-19–Gly-53 form a disordered region. Positions Pro-107 to His-118 match the 'HIGH' region motif. A compositionally biased stretch (basic and acidic residues) spans Gly-823–Ser-836. The tract at residues Gly-823–Ser-846 is disordered. A 'KMSKS' region motif is present at residues Lys-838 to Ser-842. ATP is bound at residue Lys-841.

It belongs to the class-I aminoacyl-tRNA synthetase family.

Its subcellular location is the cytoplasm. The enzyme catalyses tRNA(Leu) + L-leucine + ATP = L-leucyl-tRNA(Leu) + AMP + diphosphate. The sequence is that of Leucine--tRNA ligase from Frankia alni (strain DSM 45986 / CECT 9034 / ACN14a).